Reading from the N-terminus, the 367-residue chain is Outer membrane protein assembly factor BamC (367 aa).

Positions 1–16 are cleaved as a signal peptide; it reads MRLLPLFLMVTLAASG. Cysteine 17 carries the N-palmitoyl cysteine lipid modification. Residue cysteine 17 is the site of S-diacylglycerol cysteine attachment.

Belongs to the BamC family. Part of the Bam complex.

It localises to the cell outer membrane. In terms of biological role, part of the outer membrane protein assembly complex, which is involved in assembly and insertion of beta-barrel proteins into the outer membrane. In Thiobacillus denitrificans (strain ATCC 25259 / T1), this protein is Outer membrane protein assembly factor BamC.